A 606-amino-acid polypeptide reads, in one-letter code: R-linalool synthase, chloroplastic (606 aa).

A chloroplast-targeting transit peptide spans 1–51 (MCTIISVNHHHVAILSKPKVKLFHTKNKRSASINLPWSLSPSSSAASRPIS). (2E)-geranyl diphosphate is bound by residues Arg326, Asp363, Asp367, Arg504, and Asp507. Asp363 and Asp367 together coordinate Mg(2+). A DDXXD motif motif is present at residues 363 to 367 (DDVYD). Mg(2+) contacts are provided by Asp507, Thr511, and Glu515.

This sequence belongs to the terpene synthase family. Tpsb subfamily. Requires Mg(2+) as cofactor. The cofactor is Mn(2+).

The protein localises to the plastid. The protein resides in the chloroplast. The enzyme catalyses (2E)-geranyl diphosphate + H2O = (R)-linalool + diphosphate. It participates in secondary metabolite biosynthesis; terpenoid biosynthesis. Functionally, monoterpene synthase that catalyzes the formation of (3R)-linalool from geranyl diphosphate, but not from farnesyl diphosphate or geranylgeranyl diphosphate. The polypeptide is R-linalool synthase, chloroplastic (Mentha aquatica (Water mint)).